Here is an 80-residue protein sequence, read N- to C-terminus: Conotoxin Cl11.2 (80 aa).

A signal peptide spans 1–19; that stretch reads MKMSVTFLLILMILPLFTG. Positions 20–41 are excised as a propeptide; it reads EWQSGSRLSALKKRLLEKRLLQ. 4 disulfide bridges follow: Cys-45–Cys-59, Cys-52–Cys-63, Cys-58–Cys-68, and Cys-62–Cys-74.

This sequence belongs to the conotoxin I1 superfamily. In terms of tissue distribution, expressed by the venom duct.

The protein localises to the secreted. The sequence is that of Conotoxin Cl11.2 from Californiconus californicus (California cone).